The sequence spans 125 residues: Protein ApaG (125 aa).

The 123-residue stretch at 3–125 folds into the ApaG domain; the sequence is TAVTEGIEVT…FPLVVPGSLN (123 aa).

The protein is Protein ApaG of Anaeromyxobacter dehalogenans (strain 2CP-1 / ATCC BAA-258).